The following is a 281-amino-acid chain: DegV domain-containing protein CPE2509 (281 aa).

A DegV domain is found at 4 to 279 (IAIITDSSCD…PGMVGVSIQK (276 aa)). Residues T60 and S93 each coordinate hexadecanoate.

Functionally, may bind long-chain fatty acids, such as palmitate, and may play a role in lipid transport or fatty acid metabolism. The polypeptide is DegV domain-containing protein CPE2509 (Clostridium perfringens (strain 13 / Type A)).